The chain runs to 346 residues: Small ribosomal subunit biogenesis GTPase RsgA 1 (346 aa).

One can recognise a CP-type G domain in the interval 93–248 (AEQLIAANFD…VIDTPGMREF (156 aa)). GTP contacts are provided by residues 138–141 (TKAD) and 190–198 (GSSGVGKSS). The Zn(2+) site is built by Cys271, Cys276, His278, and Cys284.

This sequence belongs to the TRAFAC class YlqF/YawG GTPase family. RsgA subfamily. In terms of assembly, monomer. Associates with 30S ribosomal subunit, binds 16S rRNA. Requires Zn(2+) as cofactor.

The protein localises to the cytoplasm. Its function is as follows. One of several proteins that assist in the late maturation steps of the functional core of the 30S ribosomal subunit. Helps release RbfA from mature subunits. May play a role in the assembly of ribosomal proteins into the subunit. Circularly permuted GTPase that catalyzes slow GTP hydrolysis, GTPase activity is stimulated by the 30S ribosomal subunit. This chain is Small ribosomal subunit biogenesis GTPase RsgA 1, found in Listeria monocytogenes serovar 1/2a (strain ATCC BAA-679 / EGD-e).